The sequence spans 392 residues: MDYYTILGVAKTATPEEIKKAYRKLAVKYHPDKNPGDAEAERRFKEVSEAYEVLGDAQKRESYDRYGKDGPFAGAGGFGGAGMGNMEDALRTFMGAFGGDFGGNGGGFFEGLFGGLGEAFGMRGGSEGARQGASKKVHITLSFEEAAKGVEKELLVSGYKSCDACSGSGAKTSKGVKVCDRCKGSGQVVQSRGFFSMASTCPDCSGEGRVITDPCSECRGQGRIKDKRSVHVNIPSGVDSGMRLKMEGYGDAGQNGAPAGDLYIFIDVEPHPVFERHGDDLVLELPIGFVDAALGIKKEIPTLLKEGTCRLNIPEGIQSGTVLKVRGQGFPNVHGKARGDLLVRISVETPQHLSNEQKELLRKFSETEKAENFPKKRSFLDKIKGFFSDFAV.

Residues 2-67 (DYYTILGVAK…QKRESYDRYG (66 aa)) form the J domain. A CR-type zinc finger spans residues 149-227 (GVEKELLVSG…CRGQGRIKDK (79 aa)). 8 residues coordinate Zn(2+): Cys162, Cys165, Cys179, Cys182, Cys201, Cys204, Cys215, and Cys218. CXXCXGXG motif repeat units follow at residues 162 to 169 (CDACSGSG), 179 to 186 (CDRCKGSG), 201 to 208 (CPDCSGEG), and 215 to 222 (CSECRGQG).

The protein belongs to the DnaJ family. As to quaternary structure, homodimer. Requires Zn(2+) as cofactor.

Its subcellular location is the cytoplasm. Its function is as follows. Participates actively in the response to hyperosmotic and heat shock by preventing the aggregation of stress-denatured proteins and by disaggregating proteins, also in an autonomous, DnaK-independent fashion. Unfolded proteins bind initially to DnaJ; upon interaction with the DnaJ-bound protein, DnaK hydrolyzes its bound ATP, resulting in the formation of a stable complex. GrpE releases ADP from DnaK; ATP binding to DnaK triggers the release of the substrate protein, thus completing the reaction cycle. Several rounds of ATP-dependent interactions between DnaJ, DnaK and GrpE are required for fully efficient folding. Also involved, together with DnaK and GrpE, in the DNA replication of plasmids through activation of initiation proteins. The sequence is that of Chaperone protein DnaJ from Chlamydia muridarum (strain MoPn / Nigg).